Reading from the N-terminus, the 82-residue chain is NADH-ubiquinone oxidoreductase 9.5 kDa subunit (82 aa).

The chain crosses the membrane as a helical span at residues 25–43; it reads AYFYSCVIAGLGPVFLTVV.

The protein belongs to the complex I NDUFA3 subunit family. In terms of assembly, complex I is composed of about 40 different subunits.

It is found in the mitochondrion inner membrane. Functionally, accessory subunit of the mitochondrial membrane respiratory chain NADH dehydrogenase (Complex I), that is believed not to be involved in catalysis. Complex I functions in the transfer of electrons from NADH to the respiratory chain. The immediate electron acceptor for the enzyme is believed to be ubiquinone. This subunit binds ubiquinone. This chain is NADH-ubiquinone oxidoreductase 9.5 kDa subunit (nuo9.5), found in Neurospora crassa (strain ATCC 24698 / 74-OR23-1A / CBS 708.71 / DSM 1257 / FGSC 987).